A 70-amino-acid chain; its full sequence is Large ribosomal subunit protein bL31 (70 aa).

Residues Cys-16, Cys-18, Cys-37, and Cys-40 each contribute to the Zn(2+) site.

Belongs to the bacterial ribosomal protein bL31 family. Type A subfamily. In terms of assembly, part of the 50S ribosomal subunit. Zn(2+) serves as cofactor.

Functionally, binds the 23S rRNA. The sequence is that of Large ribosomal subunit protein bL31 from Histophilus somni (strain 2336) (Haemophilus somnus).